The following is a 262-amino-acid chain: Small ribosomal subunit protein uS2 (262 aa).

The interval 224 to 246 (GNQGEDQDDAQEQQVAADKKADS) is disordered.

This sequence belongs to the universal ribosomal protein uS2 family.

The sequence is that of Small ribosomal subunit protein uS2 from Lacticaseibacillus casei (strain BL23) (Lactobacillus casei).